The chain runs to 416 residues: Serine hydroxymethyltransferase (416 aa).

Residues Leu118 and 122-124 (GHL) each bind (6S)-5,6,7,8-tetrahydrofolate. Lys226 is subject to N6-(pyridoxal phosphate)lysine. (6S)-5,6,7,8-tetrahydrofolate is bound at residue Glu242.

Belongs to the SHMT family. As to quaternary structure, homodimer. Pyridoxal 5'-phosphate serves as cofactor.

The protein resides in the cytoplasm. It catalyses the reaction (6R)-5,10-methylene-5,6,7,8-tetrahydrofolate + glycine + H2O = (6S)-5,6,7,8-tetrahydrofolate + L-serine. It participates in one-carbon metabolism; tetrahydrofolate interconversion. Its pathway is amino-acid biosynthesis; glycine biosynthesis; glycine from L-serine: step 1/1. Its function is as follows. Catalyzes the reversible interconversion of serine and glycine with tetrahydrofolate (THF) serving as the one-carbon carrier. This reaction serves as the major source of one-carbon groups required for the biosynthesis of purines, thymidylate, methionine, and other important biomolecules. Also exhibits THF-independent aldolase activity toward beta-hydroxyamino acids, producing glycine and aldehydes, via a retro-aldol mechanism. The chain is Serine hydroxymethyltransferase from Helicobacter pylori (strain HPAG1).